The following is a 361-amino-acid chain: S-adenosylmethionine-dependent nucleotide dehydratase RSAD2 (361 aa).

The Radical SAM core domain occupies 69–289 (PTTPTSVNYH…LERHKEVSCL (221 aa)). 3 residues coordinate [4Fe-4S] cluster: cysteine 83, cysteine 87, and cysteine 90. Lysine 197 bears the N6-acetyllysine mark. Residue lysine 206 forms a Glycyl lysine isopeptide (Lys-Gly) (interchain with G-Cter in ubiquitin) linkage.

The protein belongs to the radical SAM superfamily. RSAD2 family. Homodimer. Interacts with IRAK1 and TRAF6. Interacts with FPPS. Interacts with HADHB. Interacts (via C-terminus) with VAPA/VAP33 (via C-terminus). As to quaternary structure, (Microbial infection) Interacts with human cytomegalovirus/HHV-5 protein vMIA/UL37; this interaction results in RSAD2/viperin relocalization from the endoplasmic reticulum to the mitochondria. In terms of assembly, (Microbial infection) Interacts (via N-terminus) with enterovirus A71 protein 2C; this interaction inhibits viral replication. (Microbial infection) Interacts with herpes simplex virus 1/HHV-1 glycoprotein D; this interaction inhibits HHV-1 replication by facilitating IRF7-mediated IFN-beta production. [4Fe-4S] cluster serves as cofactor. Post-translationally, acetylated by HAT1. HAT1-mediated acetylation of Lys-197 in turn recruits UBE4A that stimulates RSAD2 polyubiquitination leading to proteasomal degradation. In terms of processing, 'Lys-6'-linked polyubiquitination at Lys-206 leads to RSAD2 protein degradation.

It localises to the endoplasmic reticulum membrane. It is found in the golgi apparatus. The protein resides in the endoplasmic reticulum. Its subcellular location is the lipid droplet. The protein localises to the mitochondrion. It localises to the mitochondrion inner membrane. It is found in the mitochondrion outer membrane. The catalysed reaction is CTP + AH2 + S-adenosyl-L-methionine = 3'-deoxy-3',4'-didehydro-CTP + 5'-deoxyadenosine + L-methionine + A + H2O + H(+). With respect to regulation, IRAK1 and TRAF6 synergistically activate RSAD2 increasing its activity with CTP as substrate about 10-fold. Its function is as follows. Interferon-inducible antiviral protein which plays a major role in the cell antiviral state induced by type I and type II interferon. Catalyzes the conversion of cytidine triphosphate (CTP) to 3'-deoxy-3',4'-didehydro-CTP (ddhCTP) via a SAM-dependent radical mechanism. In turn, ddhCTP acts as a chain terminator for the RNA-dependent RNA polymerases from multiple viruses and directly inhibits viral replication. Therefore, inhibits a wide range of DNA and RNA viruses, including human cytomegalovirus (HCMV), hepatitis C virus (HCV), west Nile virus (WNV), dengue virus, sindbis virus, influenza A virus, sendai virus, vesicular stomatitis virus (VSV), zika virus, and human immunodeficiency virus (HIV-1). Also promotes TLR7 and TLR9-dependent production of IFN-beta production in plasmacytoid dendritic cells (pDCs) by facilitating 'Lys-63'-linked ubiquitination of IRAK1 by TRAF6. Plays a role in CD4+ T-cells activation and differentiation. Facilitates T-cell receptor (TCR)-mediated GATA3 activation and optimal T-helper 2 (Th2) cytokine production by modulating NFKB1 and JUNB activities. Can inhibit secretion of soluble proteins. This is S-adenosylmethionine-dependent nucleotide dehydratase RSAD2 from Homo sapiens (Human).